The sequence spans 813 residues: Leucine--tRNA ligase (813 aa).

The short motif at 39–49 is the 'HIGH' region element; that stretch reads PYPSGRIHMGH. The 'KMSKS' region motif lies at 582-586; the sequence is KMSKS. Lys585 contacts ATP.

The protein belongs to the class-I aminoacyl-tRNA synthetase family.

It localises to the cytoplasm. The catalysed reaction is tRNA(Leu) + L-leucine + ATP = L-leucyl-tRNA(Leu) + AMP + diphosphate. This is Leucine--tRNA ligase from Campylobacter hominis (strain ATCC BAA-381 / DSM 21671 / CCUG 45161 / LMG 19568 / NCTC 13146 / CH001A).